Here is a 146-residue protein sequence, read N- to C-terminus: Cytochrome b5 type B (146 aa).

Residues 1–11 (MATPEASGSGR) constitute a propeptide that is removed on maturation. The region spanning 20–96 (VTYYRLEEVA…LKQYYIGDVH (77 aa)) is the Cytochrome b5 heme-binding domain. At lysine 30 the chain carries N6-acetyllysine. Histidine 55 and histidine 79 together coordinate heme. Position 80 is a phosphoserine (serine 80). The chain crosses the membrane as a helical span at residues 119–136 (WAYWIVPIVGAILIGFLY).

Belongs to the cytochrome b5 family. In terms of assembly, component of a complex composed of cytochrome b5, NADH-cytochrome b5 reductase (CYB5R3) and MTARC2.

The protein resides in the mitochondrion outer membrane. Functionally, cytochrome b5 is a membrane-bound hemoprotein functioning as an electron carrier for several membrane-bound oxygenases. The polypeptide is Cytochrome b5 type B (Cyb5b) (Rattus norvegicus (Rat)).